The primary structure comprises 147 residues: ATP synthase epsilon chain (147 aa).

Belongs to the ATPase epsilon chain family. As to quaternary structure, F-type ATPases have 2 components, CF(1) - the catalytic core - and CF(0) - the membrane proton channel. CF(1) has five subunits: alpha(3), beta(3), gamma(1), delta(1), epsilon(1). CF(0) has three main subunits: a, b and c.

It localises to the cell inner membrane. Functionally, produces ATP from ADP in the presence of a proton gradient across the membrane. This Protochlamydia amoebophila (strain UWE25) protein is ATP synthase epsilon chain.